Consider the following 290-residue polypeptide: 4-hydroxybenzoate octaprenyltransferase (290 aa).

6 helical membrane-spanning segments follow: residues 41-61, 89-109, 133-153, 158-178, 202-224, and 269-289; these read WPLL…GCAM, WEAV…IQPL, FFAI…PMAF, DTVP…SVAY, FGRF…YVWI, and WLGG…GTAG.

This sequence belongs to the UbiA prenyltransferase family. Mg(2+) serves as cofactor.

The protein localises to the cell inner membrane. The catalysed reaction is all-trans-octaprenyl diphosphate + 4-hydroxybenzoate = 4-hydroxy-3-(all-trans-octaprenyl)benzoate + diphosphate. The protein operates within cofactor biosynthesis; ubiquinone biosynthesis. Its function is as follows. Catalyzes the prenylation of para-hydroxybenzoate (PHB) with an all-trans polyprenyl group. Mediates the second step in the final reaction sequence of ubiquinone-8 (UQ-8) biosynthesis, which is the condensation of the polyisoprenoid side chain with PHB, generating the first membrane-bound Q intermediate 3-octaprenyl-4-hydroxybenzoate. The chain is 4-hydroxybenzoate octaprenyltransferase from Burkholderia ambifaria (strain ATCC BAA-244 / DSM 16087 / CCUG 44356 / LMG 19182 / AMMD) (Burkholderia cepacia (strain AMMD)).